The primary structure comprises 148 residues: UPF0756 membrane protein YeaL (148 aa).

Transmembrane regions (helical) follow at residues 14 to 34 (ALGFISHNTTVAVSILVLIIV), 51 to 71 (LSIGIIILTIGVMAPIASGTL), 86 to 106 (LVAIAVGVIVSWLGGRGVTLM), and 121 to 141 (VLGVALFRGVPVGPLIAAGLV).

The protein belongs to the UPF0756 family.

The protein resides in the cell membrane. This chain is UPF0756 membrane protein YeaL, found in Shigella flexneri.